Reading from the N-terminus, the 834-residue chain is DNA-directed RNA polymerase subunit beta' (834 aa).

The span at methionine 1 to proline 22 shows a compositional bias: polar residues. The segment at methionine 1 to glycine 45 is disordered. The segment covering valine 26 to glycine 36 has biased composition (basic and acidic residues). The Zn(2+) site is built by cysteine 101, cysteine 103, cysteine 118, and cysteine 121. The Mg(2+) site is built by aspartate 606, aspartate 608, and aspartate 610.

This sequence belongs to the RNA polymerase beta' chain family. RpoC1 subfamily. In plastids the minimal PEP RNA polymerase catalytic core is composed of four subunits: alpha, beta, beta', and beta''. When a (nuclear-encoded) sigma factor is associated with the core the holoenzyme is formed, which can initiate transcription. Mg(2+) serves as cofactor. The cofactor is Zn(2+).

The protein resides in the plastid. It localises to the chloroplast. The catalysed reaction is RNA(n) + a ribonucleoside 5'-triphosphate = RNA(n+1) + diphosphate. Its function is as follows. DNA-dependent RNA polymerase catalyzes the transcription of DNA into RNA using the four ribonucleoside triphosphates as substrates. The polypeptide is DNA-directed RNA polymerase subunit beta' (Staurastrum punctulatum (Green alga)).